Reading from the N-terminus, the 782-residue chain is Isoamylase 3, chloroplastic (782 aa).

Residues 1 to 68 constitute a chloroplast transit peptide; that stretch reads MDSIGINRAP…EKVRRFDSVR (68 aa). Residues 68–81 show a composition bias toward polar residues; sequence RSTTARAQNGNAGR. The tract at residues 68–88 is disordered; it reads RSTTARAQNGNAGRSMTEERG. The active-site Nucleophile is the aspartate 445. The active-site Proton donor is the glutamate 482.

The protein belongs to the glycosyl hydrolase 13 family. Expressed in leaves. Expressed at low levels in developing endosperm.

It localises to the plastid. Its subcellular location is the chloroplast. The protein resides in the amyloplast. The enzyme catalyses Hydrolysis of (1-&gt;6)-alpha-D-glucosidic branch linkages in glycogen, amylopectin and their beta-limit dextrins.. Functionally, starch-debranching enzyme that plays a role in the degradation of transitory starch during the night in leaf blades, facilitates the formation of spherical amyloplasts containing compound granules in the endosperm, and affects morphological characteristics of plastids. The polypeptide is Isoamylase 3, chloroplastic (Oryza sativa subsp. japonica (Rice)).